A 434-amino-acid polypeptide reads, in one-letter code: Serine hydroxymethyltransferase (434 aa).

(6S)-5,6,7,8-tetrahydrofolate contacts are provided by residues leucine 133 and 137–139; that span reads GHL. At lysine 242 the chain carries N6-(pyridoxal phosphate)lysine.

This sequence belongs to the SHMT family. As to quaternary structure, homodimer. The cofactor is pyridoxal 5'-phosphate.

Its subcellular location is the cytoplasm. It catalyses the reaction (6R)-5,10-methylene-5,6,7,8-tetrahydrofolate + glycine + H2O = (6S)-5,6,7,8-tetrahydrofolate + L-serine. It functions in the pathway one-carbon metabolism; tetrahydrofolate interconversion. Its pathway is amino-acid biosynthesis; glycine biosynthesis; glycine from L-serine: step 1/1. Catalyzes the reversible interconversion of serine and glycine with tetrahydrofolate (THF) serving as the one-carbon carrier. This reaction serves as the major source of one-carbon groups required for the biosynthesis of purines, thymidylate, methionine, and other important biomolecules. Also exhibits THF-independent aldolase activity toward beta-hydroxyamino acids, producing glycine and aldehydes, via a retro-aldol mechanism. This chain is Serine hydroxymethyltransferase, found in Methylorubrum populi (strain ATCC BAA-705 / NCIMB 13946 / BJ001) (Methylobacterium populi).